We begin with the raw amino-acid sequence, 729 residues long: Fatty acid oxidation complex subunit alpha (729 aa).

Residues Met-1 to Lys-189 are enoyl-CoA hydratase/isomerase. Asp-296 is a substrate binding site. The 3-hydroxyacyl-CoA dehydrogenase stretch occupies residues Glu-311–Ala-729. NAD(+) is bound by residues Met-324, Asp-343, Val-400–Glu-402, Lys-407, and Ser-429. Catalysis depends on His-450, which acts as the For 3-hydroxyacyl-CoA dehydrogenase activity. Residue Asn-453 participates in NAD(+) binding. Substrate contacts are provided by Asn-500 and Tyr-660. The disordered stretch occupies residues Arg-708 to Ala-729.

In the N-terminal section; belongs to the enoyl-CoA hydratase/isomerase family. This sequence in the C-terminal section; belongs to the 3-hydroxyacyl-CoA dehydrogenase family. Heterotetramer of two alpha chains (FadB) and two beta chains (FadA).

It carries out the reaction a (3S)-3-hydroxyacyl-CoA + NAD(+) = a 3-oxoacyl-CoA + NADH + H(+). The enzyme catalyses a (3S)-3-hydroxyacyl-CoA = a (2E)-enoyl-CoA + H2O. The catalysed reaction is a 4-saturated-(3S)-3-hydroxyacyl-CoA = a (3E)-enoyl-CoA + H2O. It catalyses the reaction (3S)-3-hydroxybutanoyl-CoA = (3R)-3-hydroxybutanoyl-CoA. It carries out the reaction a (3Z)-enoyl-CoA = a 4-saturated (2E)-enoyl-CoA. The enzyme catalyses a (3E)-enoyl-CoA = a 4-saturated (2E)-enoyl-CoA. Its pathway is lipid metabolism; fatty acid beta-oxidation. Functionally, involved in the aerobic and anaerobic degradation of long-chain fatty acids via beta-oxidation cycle. Catalyzes the formation of 3-oxoacyl-CoA from enoyl-CoA via L-3-hydroxyacyl-CoA. It can also use D-3-hydroxyacyl-CoA and cis-3-enoyl-CoA as substrate. In Escherichia coli O6:H1 (strain CFT073 / ATCC 700928 / UPEC), this protein is Fatty acid oxidation complex subunit alpha.